Here is a 533-residue protein sequence, read N- to C-terminus: Spindle pole body protein CSA6 (533 aa).

Disordered regions lie at residues 1-32 (MEDSTEDIIKSFTLEQSPEIKPKPKSKTSDLT) and 53-130 (DKYD…QEDE). 2 stretches are compositionally biased toward basic and acidic residues: residues 18–30 (PEIKPKPKSKTSD) and 53–68 (DKYDQNVSDSEHDLTP). Positions 83 to 94 (PSKFSSSIPQKP) are enriched in low complexity. The span at 103–121 (SSPTKNYTDHINQLRSGPN) shows a compositional bias: polar residues. A coiled-coil region spans residues 136–236 (KYEIKRLKQE…RSERDELVKD (101 aa)). The span at 309 to 318 (EKDKPSEDKT) shows a compositional bias: basic and acidic residues. Disordered regions lie at residues 309-329 (EKDKPSEDKTSSPNFDSSKDA) and 349-453 (SANS…QSTK). Polar residues-rich tracts occupy residues 349–392 (SANS…SNSQ) and 405–421 (IYSSSTPNTNGYNQSSH). The segment covering 432 to 445 (PRVERDHWTDRPPS) has biased composition (basic and acidic residues).

It localises to the cytoplasm. The protein localises to the cytoskeleton. The protein resides in the microtubule organizing center. It is found in the spindle pole body. Functionally, plays a role in mitotic spindle pole body organization, possibly at the point of spindle pole body separation. Required for mitotic exit. The protein is Spindle pole body protein CSA6 of Candida dubliniensis (strain CD36 / ATCC MYA-646 / CBS 7987 / NCPF 3949 / NRRL Y-17841) (Yeast).